The primary structure comprises 177 residues: B-phycoerythrin beta chain (177 aa).

Positions 50 and 61 each coordinate phycourobilin. Asn-72 carries the post-translational modification N4-methylasparagine. (2R,3E)-phycoerythrobilin contacts are provided by Cys-82 and Cys-158.

It belongs to the phycobiliprotein family. As to quaternary structure, heteromer of 6 alpha, 6 beta and one gamma chain. Post-translationally, contains two covalently linked phycoerythrobilin chromophores and one covalently linked phycourobilin chromophore.

It is found in the plastid. Its subcellular location is the chloroplast thylakoid membrane. Light-harvesting photosynthetic bile pigment-protein from the phycobiliprotein complex. The protein is B-phycoerythrin beta chain (cpeB) of Porphyridium purpureum (Red alga).